A 155-amino-acid chain; its full sequence is Transcriptional repressor NrdR (155 aa).

Residues 3-34 fold into a zinc finger; that stretch reads CPFCNQTDTKVIDSRLVADGVQVRRRRECQAC. Residues 49–139 enclose the ATP-cone domain; that stretch reads PKVIKQDGTR…VYRSFQDISE (91 aa).

It belongs to the NrdR family. It depends on Zn(2+) as a cofactor.

Functionally, negatively regulates transcription of bacterial ribonucleotide reductase nrd genes and operons by binding to NrdR-boxes. This Teredinibacter turnerae (strain ATCC 39867 / T7901) protein is Transcriptional repressor NrdR.